A 196-amino-acid chain; its full sequence is Translation machinery-associated protein 22 (196 aa).

Positions 111–182 (IIIKRIERNK…EAKEYIEKLL (72 aa)) constitute an SUI1 domain.

This sequence belongs to the DENR family. Interacts with the 40S ribosomal subunit.

Its subcellular location is the cytoplasm. The protein is Translation machinery-associated protein 22 (TMA22) of Lodderomyces elongisporus (strain ATCC 11503 / CBS 2605 / JCM 1781 / NBRC 1676 / NRRL YB-4239) (Yeast).